The chain runs to 610 residues: UvrABC system protein C (610 aa).

The region spanning 16-94 is the GIY-YIG domain; that stretch reads SQPGVYRMYD…IKLYQPRYNV (79 aa). The region spanning 204-239 is the UVR domain; that stretch reads DQVLTQLISRMETASQNLEFEEAARIRDQIQAVRRV.

It belongs to the UvrC family. In terms of assembly, interacts with UvrB in an incision complex.

It localises to the cytoplasm. In terms of biological role, the UvrABC repair system catalyzes the recognition and processing of DNA lesions. UvrC both incises the 5' and 3' sides of the lesion. The N-terminal half is responsible for the 3' incision and the C-terminal half is responsible for the 5' incision. This is UvrABC system protein C from Escherichia coli O139:H28 (strain E24377A / ETEC).